Reading from the N-terminus, the 57-residue chain is Insulin (57 aa).

Intrachain disulfides connect Cys12/Cys43, Cys24/Cys56, and Cys42/Cys47.

This sequence belongs to the insulin family. As to quaternary structure, heterodimer of a B chain and an A chain linked by two disulfide bonds.

It localises to the secreted. Insulin decreases blood glucose concentration. It increases cell permeability to monosaccharides, amino acids and fatty acids. It accelerates glycolysis, the pentose phosphate cycle, and glycogen synthesis in liver. This Lampetra fluviatilis (European river lamprey) protein is Insulin (ins).